The following is a 121-amino-acid chain: Protein FAM241B (121 aa).

The interval 12–58 is disordered; that stretch reads QDDDPRVRTTTQPPRGSIPRQSFFNRGHGAPPGGPGPRQQQAGARLG. A compositionally biased stretch (polar residues) spans 19–35; it reads RTTTQPPRGSIPRQSFF. S33 is subject to Phosphoserine. Residues 48–58 are compositionally biased toward low complexity; that stretch reads PRQQQAGARLG. At S62 the chain carries Phosphoserine. Residues 92–112 form a helical membrane-spanning segment; that stretch reads ILLLFLLMMLGVRGLLLVGLV.

It belongs to the FAM241 family.

The protein resides in the membrane. May play a role in lysosome homeostasis. The chain is Protein FAM241B from Homo sapiens (Human).